Consider the following 503-residue polypeptide: MSIKAEEISSLIKQQLEHYDDKLDINEVGVVTYVGDGIARAHGLDDVLSGELLKFDNGSFGIAQNLESNDVGIIILGQFDNIREGDRVQRTGRIMEVPVGDALIGRVVNPLGQPVDGLGEIKSDKTRPIEAKAPGVMDRQSVNQPLQTGIKAIDALVPIGRGQRELIIGDRKTGKTSLAIDTILNQKGQDVICIYVAIGQKESTVRTQVETLKRFGAMDYTIVVEAGPSEPAPMLYIAPYAGTAMGEEFMYNGKDVLIVFDDLSKQAVAYRELSLLLRRPPGREAYPGDVFYLHSRLLERSAKLSDKLGGGSLTALPIIQTEAGDISAYIPTNVISITDGQIFLQSDLFFAGTRPAIDAGNSVSRVGGNAQIKAMKKVAGTLRTDLTAYRELESFAQFGSDLDQATQAKLNRGQRTVEVLKQPLHDPIPVEKQVLILYALTHGYLDAIPVEDISRFQNELFDNFDSSHADLLKTIRETGKLPDDKELSAAIEEFSESFTPSEK.

169-176 (GDRKTGKT) is a binding site for ATP.

Belongs to the ATPase alpha/beta chains family. F-type ATPases have 2 components, CF(1) - the catalytic core - and CF(0) - the membrane proton channel. CF(1) has five subunits: alpha(3), beta(3), gamma(1), delta(1), epsilon(1). CF(0) has three main subunits: a(1), b(2) and c(9-12). The alpha and beta chains form an alternating ring which encloses part of the gamma chain. CF(1) is attached to CF(0) by a central stalk formed by the gamma and epsilon chains, while a peripheral stalk is formed by the delta and b chains.

It is found in the cell membrane. It catalyses the reaction ATP + H2O + 4 H(+)(in) = ADP + phosphate + 5 H(+)(out). Its activity is regulated as follows. Increases 2-fold following exposure to low pH. In terms of biological role, produces ATP from ADP in the presence of a proton gradient across the membrane. The alpha chain is a regulatory subunit. This Lactobacillus acidophilus (strain ATCC 700396 / NCK56 / N2 / NCFM) protein is ATP synthase subunit alpha.